The primary structure comprises 560 residues: uncharacterized protein (560 aa).

A run of 5 helical transmembrane segments spans residues 9-29, 61-81, 136-156, 305-325, and 442-462; these read LVIT…SFLL, ILVP…KYKI, IGIA…ASMM, SLQI…ASFI, and VVLE…TNFY.

Its subcellular location is the membrane. This is an uncharacterized protein from Saccharomyces cerevisiae (strain ATCC 204508 / S288c) (Baker's yeast).